We begin with the raw amino-acid sequence, 145 residues long: 3-hydroxyacyl-[acyl-carrier-protein] dehydratase FabZ (145 aa).

Residue H48 is part of the active site.

This sequence belongs to the thioester dehydratase family. FabZ subfamily.

The protein localises to the cytoplasm. The enzyme catalyses a (3R)-hydroxyacyl-[ACP] = a (2E)-enoyl-[ACP] + H2O. In terms of biological role, involved in unsaturated fatty acids biosynthesis. Catalyzes the dehydration of short chain beta-hydroxyacyl-ACPs and long chain saturated and unsaturated beta-hydroxyacyl-ACPs. The sequence is that of 3-hydroxyacyl-[acyl-carrier-protein] dehydratase FabZ from Geobacillus thermodenitrificans (strain NG80-2).